A 506-amino-acid chain; its full sequence is DEAD-box ATP-dependent RNA helicase CshA (506 aa).

The Q motif motif lies at glutamine 2–lysine 30. The Helicase ATP-binding domain maps to isoleucine 33–isoleucine 203. Alanine 46–threonine 53 is a binding site for ATP. The DEAD box signature appears at aspartate 150–aspartate 153. The Helicase C-terminal domain maps to glutamine 214–leucine 375. The segment at glutamate 436 to lysine 506 is disordered. Positions lysine 468 to threonine 480 are enriched in basic residues.

This sequence belongs to the DEAD box helicase family. CshA subfamily. Oligomerizes, may be a member of the RNA degradosome.

The protein resides in the cytoplasm. It carries out the reaction ATP + H2O = ADP + phosphate + H(+). Functionally, DEAD-box RNA helicase possibly involved in RNA degradation. Unwinds dsRNA in both 5'- and 3'-directions, has RNA-dependent ATPase activity. The protein is DEAD-box ATP-dependent RNA helicase CshA of Staphylococcus aureus (strain MW2).